The following is a 285-amino-acid chain: Alpha-acetolactate decarboxylase (285 aa).

The first 25 residues, Met1–Ala25, serve as a signal peptide directing secretion.

Belongs to the alpha-acetolactate decarboxylase family.

It carries out the reaction (2S)-2-acetolactate + H(+) = (R)-acetoin + CO2. It participates in polyol metabolism; (R,R)-butane-2,3-diol biosynthesis; (R,R)-butane-2,3-diol from pyruvate: step 2/3. Converts acetolactate into acetoin, which can be excreted by the cells. This may be a mechanism for controlling the internal pH of cells in the stationary stage. The sequence is that of Alpha-acetolactate decarboxylase (aldB) from Brevibacillus brevis (Bacillus brevis).